The chain runs to 623 residues: uncharacterized protein (623 aa).

A run of 5 helical transmembrane segments spans residues 242 to 262 (IALA…ITWL), 288 to 308 (IVSP…LDIF), 318 to 338 (VSMW…IALF), 361 to 381 (VINL…LLGV), and 387 to 407 (FNVS…ALAV).

It belongs to the MscS (TC 1.A.23) family.

It is found in the cell membrane. This is an uncharacterized protein from Helicobacter pylori (strain J99 / ATCC 700824) (Campylobacter pylori J99).